Reading from the N-terminus, the 636-residue chain is 1-deoxy-D-xylulose-5-phosphate synthase (636 aa).

Thiamine diphosphate-binding positions include His-84 and 125–127 (GHS). Residue Asp-156 coordinates Mg(2+). Thiamine diphosphate contacts are provided by residues 157–158 (GA), Asn-185, Phe-292, and Glu-375. Mg(2+) is bound at residue Asn-185.

This sequence belongs to the transketolase family. DXPS subfamily. In terms of assembly, homodimer. Requires Mg(2+) as cofactor. The cofactor is thiamine diphosphate.

The enzyme catalyses D-glyceraldehyde 3-phosphate + pyruvate + H(+) = 1-deoxy-D-xylulose 5-phosphate + CO2. It participates in metabolic intermediate biosynthesis; 1-deoxy-D-xylulose 5-phosphate biosynthesis; 1-deoxy-D-xylulose 5-phosphate from D-glyceraldehyde 3-phosphate and pyruvate: step 1/1. Its function is as follows. Catalyzes the acyloin condensation reaction between C atoms 2 and 3 of pyruvate and glyceraldehyde 3-phosphate to yield 1-deoxy-D-xylulose-5-phosphate (DXP). This Cellvibrio japonicus (strain Ueda107) (Pseudomonas fluorescens subsp. cellulosa) protein is 1-deoxy-D-xylulose-5-phosphate synthase.